The following is a 255-amino-acid chain: Acetylglutamate kinase (255 aa).

Residues 40–41, Arg-62, and Asn-153 each bind substrate; that span reads GG.

This sequence belongs to the acetylglutamate kinase family. ArgB subfamily.

It is found in the cytoplasm. It carries out the reaction N-acetyl-L-glutamate + ATP = N-acetyl-L-glutamyl 5-phosphate + ADP. The protein operates within amino-acid biosynthesis; L-arginine biosynthesis; N(2)-acetyl-L-ornithine from L-glutamate: step 2/4. Catalyzes the ATP-dependent phosphorylation of N-acetyl-L-glutamate. In Bacillus mycoides (strain KBAB4) (Bacillus weihenstephanensis), this protein is Acetylglutamate kinase.